We begin with the raw amino-acid sequence, 894 residues long: Tyrosine-protein kinase receptor UFO (894 aa).

Positions 1 to 25 (MAWRCPRMGRVPLAWCLALCGWACM) are cleaved as a signal peptide. Residues 26-92 (APRGTQAEES…QTQVPLGEDE (67 aa)) form an interaction with GAS6 region. Residues 26 to 451 (APRGTQAEES…STPAFSWPWW (426 aa)) lie on the Extracellular side of the membrane. 2 Ig-like C2-type domains span residues 27-128 (PRGT…TFVS) and 139-222 (PYFL…ATIT). Asn43 is a glycosylation site (N-linked (GlcNAc...) asparagine). The cysteines at positions 56 and 117 are disulfide-linked. Asn157 and Asn198 each carry an N-linked (GlcNAc...) asparagine glycan. A disulfide bridge links Cys160 with Cys205. 2 consecutive Fibronectin type-III domains span residues 227-331 (QPRN…TPEG) and 336-428 (PPEN…AWRP). Residues Asn339, Asn345, and Asn401 are each glycosylated (N-linked (GlcNAc...) asparagine). The chain crosses the membrane as a helical span at residues 452–472 (YVLLGAVVAAACVLILALFLV). The Cytoplasmic segment spans residues 473–894 (HRRKKETRYG…PAAPGQEDGA (422 aa)). The Protein kinase domain maps to 536-807 (VALGKTLGEG…ELREDLENTL (272 aa)). Residues 542–550 (LGEGEFGAV) and Lys567 contribute to the ATP site. Asp672 (proton acceptor) is an active-site residue. Phosphotyrosine; by autocatalysis occurs at positions 703, 779, and 821. 2 disordered regions span residues 823-853 (NMDEGGGYPEPPGAAGGADPPTQPDPKDSCS) and 866-894 (YVLCPSTTPSPAQPADRGSPAAPGQEDGA). The residue at position 866 (Tyr866) is a Phosphotyrosine; by autocatalysis. Position 884 is a phosphoserine (Ser884).

This sequence belongs to the protein kinase superfamily. Tyr protein kinase family. AXL/UFO subfamily. As to quaternary structure, heterodimer and heterotetramer with ligand GAS6. Interacts with CBL, GRB2, LCK, NCK2, PIK3R1, PIK3R2, PIK3R3, PLCG1, SOCS1 and TNS2. Part of a complex including AXL, TNK2 and GRB2, in which GRB2 promotes AXL recruitment by TNK2. Monoubiquitinated upon GAS6-binding. A very small proportion of the receptor could be subjected to polyubiquitination in a very transient fashion. Post-translationally, phosphorylated at tyrosine residues by autocatalysis, which activates kinase activity. Highly expressed in metastatic colon tumors. Expressed in primary colon tumors. Weakly expressed in normal colon tissue.

The protein localises to the cell membrane. It catalyses the reaction L-tyrosyl-[protein] + ATP = O-phospho-L-tyrosyl-[protein] + ADP + H(+). Its activity is regulated as follows. Activated by GAS6-binding and subsequent autophosphorylation. In terms of biological role, receptor tyrosine kinase that transduces signals from the extracellular matrix into the cytoplasm by binding growth factor GAS6 and which is thus regulating many physiological processes including cell survival, cell proliferation, migration and differentiation. Ligand binding at the cell surface induces dimerization and autophosphorylation of AXL. Following activation by ligand, AXL binds and induces tyrosine phosphorylation of PI3-kinase subunits PIK3R1, PIK3R2 and PIK3R3; but also GRB2, PLCG1, LCK and PTPN11. Other downstream substrate candidates for AXL are CBL, NCK2, SOCS1 and TNS2. Recruitment of GRB2 and phosphatidylinositol 3 kinase regulatory subunits by AXL leads to the downstream activation of the AKT kinase. GAS6/AXL signaling plays a role in various processes such as endothelial cell survival during acidification by preventing apoptosis, optimal cytokine signaling during human natural killer cell development, hepatic regeneration, gonadotropin-releasing hormone neuron survival and migration, platelet activation, or regulation of thrombotic responses. Also plays an important role in inhibition of Toll-like receptors (TLRs)-mediated innate immune response. (Microbial infection) Acts as a receptor for lassa virus and lymphocytic choriomeningitis virus, possibly through GAS6 binding to phosphatidyl-serine at the surface of virion envelope. Functionally, (Microbial infection) Acts as a receptor for Ebolavirus, possibly through GAS6 binding to phosphatidyl-serine at the surface of virion envelope. Its function is as follows. (Microbial infection) Promotes Zika virus entry in glial cells, Sertoli cells and astrocytes. Additionally, Zika virus potentiates AXL kinase activity to antagonize type I interferon signaling and thereby promotes infection. Interferon signaling inhibition occurs via an SOCS1-dependent mechanism. This is Tyrosine-protein kinase receptor UFO (AXL) from Homo sapiens (Human).